Reading from the N-terminus, the 529-residue chain is Bifunctional purine biosynthesis protein PurH (529 aa).

The MGS-like domain maps to 1 to 148 (MQQRRPVRRA…KNHKDVAIVV (148 aa)).

It belongs to the PurH family.

It carries out the reaction (6R)-10-formyltetrahydrofolate + 5-amino-1-(5-phospho-beta-D-ribosyl)imidazole-4-carboxamide = 5-formamido-1-(5-phospho-D-ribosyl)imidazole-4-carboxamide + (6S)-5,6,7,8-tetrahydrofolate. It catalyses the reaction IMP + H2O = 5-formamido-1-(5-phospho-D-ribosyl)imidazole-4-carboxamide. It functions in the pathway purine metabolism; IMP biosynthesis via de novo pathway; 5-formamido-1-(5-phospho-D-ribosyl)imidazole-4-carboxamide from 5-amino-1-(5-phospho-D-ribosyl)imidazole-4-carboxamide (10-formyl THF route): step 1/1. The protein operates within purine metabolism; IMP biosynthesis via de novo pathway; IMP from 5-formamido-1-(5-phospho-D-ribosyl)imidazole-4-carboxamide: step 1/1. This chain is Bifunctional purine biosynthesis protein PurH, found in Salmonella enteritidis PT4 (strain P125109).